The chain runs to 507 residues: TOM1-like protein 2 (507 aa).

In terms of domain architecture, VHS spans 20–152; the sequence is ATDGSLQSED…ELKRKGVEFP (133 aa). Ser-160 bears the Phosphoserine mark. A disordered region spans residues 162 to 210; it reads IHTPQRSVPEVDPAATMPRSQSQQRTSAGSYSSPPPAPYSAPQAPALSV. Phosphothreonine is present on Thr-164. The GAT domain occupies 219 to 307; sequence EQIARLRSEL…VFLRYERFER (89 aa). The Clathrin-binding signature appears at 329-334; it reads NLIDLG. The tract at residues 467–507 is disordered; sequence RAKAAEMVPDLPSPPMEAPAPASNPSGRKKPERSEDALFAL. Basic and acidic residues predominate over residues 498-507; it reads ERSEDALFAL.

It belongs to the TOM1 family. Interacts with clathrin, SRC and TOLLIP. Interacts with MYO6. In terms of tissue distribution, ubiquitously expressed with higher expression in heart and skeletal muscle.

Functionally, acts as a MYO6/Myosin VI adapter protein that targets myosin VI to endocytic structures. May also play a role in recruiting clathrin to endosomes. May regulate growth factor-induced mitogenic signaling. The chain is TOM1-like protein 2 (TOM1L2) from Homo sapiens (Human).